Consider the following 251-residue polypeptide: Probable transcriptional regulatory protein BLD_0450 (251 aa).

This sequence belongs to the TACO1 family.

Its subcellular location is the cytoplasm. The chain is Probable transcriptional regulatory protein BLD_0450 from Bifidobacterium longum (strain DJO10A).